The chain runs to 259 residues: NAD kinase (259 aa).

Asp-49 (proton acceptor) is an active-site residue. NAD(+)-binding positions include 49–50 (DG), Arg-54, 118–119 (NE), Asp-148, Ala-156, 159–164 (TAYNYS), and Ala-183.

This sequence belongs to the NAD kinase family. A divalent metal cation is required as a cofactor.

The protein localises to the cytoplasm. It catalyses the reaction NAD(+) + ATP = ADP + NADP(+) + H(+). Involved in the regulation of the intracellular balance of NAD and NADP, and is a key enzyme in the biosynthesis of NADP. Catalyzes specifically the phosphorylation on 2'-hydroxyl of the adenosine moiety of NAD to yield NADP. This Xylella fastidiosa (strain 9a5c) protein is NAD kinase.